A 522-amino-acid chain; its full sequence is MPNNKFFVKSSKASLRWLGATVLLTLYALPSWAFSIDDVAKQAQALAAKGYEAPKSNVPSQFREMKFADYQQIQFNHDKALWHDLPTPFKIEFYHQGMYFDQAVKINEVTATAVNEVKYSSDMFNFGSVNHDPDAVKDLGFAGFKILYPINQLDKNDEIVSMLGASYFRVIGKGQVYGLSARGLAIDTALASGEEFPRFREFWIERPKANDKHLVLYALLDSPRATGAYRFVIYPGRDTSVDVQSRVYLRDKVGKLGLAPLTSMFLFGPNQPAMTMNFRPALHDSDGLSIHAGNGEWIWRPLNNPRHLSVSTFQVENPRGFGLLQRGRDFFQYQDLDDRYDLRSSGWVEPRGDWGKGHVELVEIPTNDETNDNIVAFWTPEKLPDVGQPLELAYRLHFSRDEDKIHSADFAYVKQTLRSAGDVKQTNLTRQPDGTTAFQVDFVGQPLKELDQAAPVTSQISVGDNADVVENSVRFNPVTHGWRLTLRLKVKDTKQPTEMRAALVNGDKTLTETWSYLLPANE.

An N-terminal signal peptide occupies residues 1 to 33 (MPNNKFFVKSSKASLRWLGATVLLTLYALPSWA).

Belongs to the OpgD/OpgG family.

Its subcellular location is the periplasm. It participates in glycan metabolism; osmoregulated periplasmic glucan (OPG) biosynthesis. Functionally, involved in the biosynthesis of osmoregulated periplasmic glucans (OPGs). This is Glucans biosynthesis protein G from Sodalis glossinidius (strain morsitans).